The sequence spans 185 residues: Anterior gradient protein 2 (185 aa).

Positions 1 to 18 are cleaved as a signal peptide; it reads MQTGLSLACLVLLCSVLG. Residues 25–45 are disordered; sequence PKRQAGATDTNGAAKSEPAPV.

Belongs to the AGR family. Expressed in the anterior of the dorsal ectoderm from late gastrula stages onwards. Becomes restricted to the cement gland anlage at the onset of neurulation (stages 13 to 14) and expressed exclusively in the cement gland from stage 18 onwards, with transient expression in the hatching gland during tailbud stages.

The protein resides in the secreted. Involved in cement gland formation; probably specifies dorsal ectoderm to acquire an anterior fate such as cement gland and forebrain. Signals via the FGF pathway. The sequence is that of Anterior gradient protein 2 (ag2) from Xenopus laevis (African clawed frog).